Consider the following 128-residue polypeptide: Sulfurtransferase TusD (128 aa).

Cys-78 (cysteine persulfide intermediate) is an active-site residue.

It belongs to the DsrE/TusD family. In terms of assembly, heterohexamer, formed by a dimer of trimers. The hexameric TusBCD complex contains 2 copies each of TusB, TusC and TusD. The TusBCD complex interacts with TusE.

The protein localises to the cytoplasm. In terms of biological role, part of a sulfur-relay system required for 2-thiolation of 5-methylaminomethyl-2-thiouridine (mnm(5)s(2)U) at tRNA wobble positions. Accepts sulfur from TusA and transfers it in turn to TusE. This chain is Sulfurtransferase TusD, found in Escherichia coli O7:K1 (strain IAI39 / ExPEC).